Reading from the N-terminus, the 540-residue chain is Chaperonin GroEL 2 (540 aa).

ATP is bound by residues 29 to 32 (TLGP), 86 to 90 (DGTTT), Gly413, and Asp492. Positions 521-540 (KPEKEKASVPGGGDMGGMDF) are disordered. Residues 530-540 (PGGGDMGGMDF) show a composition bias toward gly residues.

It belongs to the chaperonin (HSP60) family. In terms of assembly, forms a cylinder of 14 subunits composed of two heptameric rings stacked back-to-back. Interacts with the co-chaperonin GroES.

The protein resides in the secreted. It localises to the capsule. Its subcellular location is the cell surface. It is found in the cell wall. The catalysed reaction is ATP + H2O + a folded polypeptide = ADP + phosphate + an unfolded polypeptide.. Its function is as follows. Together with its co-chaperonin GroES, plays an essential role in assisting protein folding. The GroEL-GroES system forms a nano-cage that allows encapsulation of the non-native substrate proteins and provides a physical environment optimized to promote and accelerate protein folding. The sequence is that of Chaperonin GroEL 2 from Mycobacterium tuberculosis (strain ATCC 25177 / H37Ra).